The following is a 99-amino-acid chain: UPF0729 protein CG18508 (99 aa).

The disordered stretch occupies residues 60–99 (PGGKKTENVSDDDAEESENPPLNATAMAAETEVDESKKEI). Acidic residues predominate over residues 68 to 77 (VSDDDAEESE). At S69 the chain carries Phosphoserine.

The protein belongs to the UPF0729 family.

This is UPF0729 protein CG18508 from Drosophila melanogaster (Fruit fly).